An 896-amino-acid chain; its full sequence is Translation initiation factor IF-2 (896 aa).

Composition is skewed to basic and acidic residues over residues 94–159 and 166–219; these read KRDP…KDKV and DMTK…EKNW. The disordered stretch occupies residues 94–307; that stretch reads KRDPQEAERL…GSALQQGFQK (214 aa). The segment covering 256–271 has biased composition (basic residues); the sequence is GRGRNAKAARPAKKGN. Residues 272 to 285 show a composition bias toward basic and acidic residues; it reads KHAESKADREEARA. The 170-residue stretch at 395-564 folds into the tr-type G domain; that stretch reads PRAPVVTIMG…LLQAEVLELK (170 aa). The interval 404–411 is G1; sequence GHVDHGKT. 404 to 411 serves as a coordination point for GTP; the sequence is GHVDHGKT. Residues 429–433 form a G2 region; the sequence is GITQH. The G3 stretch occupies residues 450–453; sequence DTPG. GTP contacts are provided by residues 450 to 454 and 504 to 507; these read DTPGH and NKID. Residues 504-507 are G4; the sequence is NKID. Residues 540–542 are G5; sequence SAK.

Belongs to the TRAFAC class translation factor GTPase superfamily. Classic translation factor GTPase family. IF-2 subfamily.

The protein resides in the cytoplasm. Its function is as follows. One of the essential components for the initiation of protein synthesis. Protects formylmethionyl-tRNA from spontaneous hydrolysis and promotes its binding to the 30S ribosomal subunits. Also involved in the hydrolysis of GTP during the formation of the 70S ribosomal complex. The polypeptide is Translation initiation factor IF-2 (infB) (Klebsiella oxytoca).